The following is an 821-amino-acid chain: DNA ligase (821 aa).

NAD(+) is bound by residues 33–37 (DVDYD), 82–83 (SL), and Glu-113. Residue Lys-115 is the N6-AMP-lysine intermediate of the active site. Residues Arg-136, Glu-173, Lys-290, and Lys-314 each coordinate NAD(+). Positions 408, 411, 426, and 432 each coordinate Zn(2+). The region spanning 741-821 (IVAGPLDGQT…RLLAYLAEHE (81 aa)) is the BRCT domain.

The protein belongs to the NAD-dependent DNA ligase family. LigA subfamily. The cofactor is Mg(2+). It depends on Mn(2+) as a cofactor.

The catalysed reaction is NAD(+) + (deoxyribonucleotide)n-3'-hydroxyl + 5'-phospho-(deoxyribonucleotide)m = (deoxyribonucleotide)n+m + AMP + beta-nicotinamide D-nucleotide.. DNA ligase that catalyzes the formation of phosphodiester linkages between 5'-phosphoryl and 3'-hydroxyl groups in double-stranded DNA using NAD as a coenzyme and as the energy source for the reaction. It is essential for DNA replication and repair of damaged DNA. The polypeptide is DNA ligase (Stenotrophomonas maltophilia (strain K279a)).